Here is a 442-residue protein sequence, read N- to C-terminus: Histidine--tRNA ligase (442 aa).

The protein belongs to the class-II aminoacyl-tRNA synthetase family. Homodimer.

The protein localises to the cytoplasm. The enzyme catalyses tRNA(His) + L-histidine + ATP = L-histidyl-tRNA(His) + AMP + diphosphate + H(+). This chain is Histidine--tRNA ligase (hisS), found in Treponema pallidum (strain Nichols).